The sequence spans 307 residues: MKDESAFFTIDHIIKLDNGQSIRVWETLPKKNVPEKKHTILIASGFARRMDHFAGLAEYLSTNGFHVIRYDSLHHVGLSSGCINEFTMSIGKNSLLTVVDWLTDHGVERIGLIAASLSARIAYEVVNKIKLSFLITAVGVVNLRDTLEKALEYDYLQLPISELPEDLDFEGHNLGSEVFVTDCFKHNWDTLDSTLNSVKGLAIPFIAFTANDDSWVKQSEVIELIDSIESSNCKLYSLIGSSHDLGENLVVLRNFYQSVTKAALALDDGLLDLEIDIIEPRFEDVTSITVKERRLKNEIENELLELA.

Catalysis depends on charge relay system residues Ser116, Asp213, and His243.

The protein belongs to the LuxD family.

Its pathway is lipid metabolism; fatty acid reduction for biolumincescence. Functionally, acyl transferase is part of the fatty acid reductase system required for aldehyde biosynthesis; it produces fatty acids for the luminescent reaction. In Aliivibrio fischeri (Vibrio fischeri), this protein is Acyl transferase.